The primary structure comprises 453 residues: F-box protein SKIP14 (453 aa).

In terms of domain architecture, F-box; degenerate spans 34 to 104 (RKNTGGDASS…NRQQLFAGLS (71 aa)).

In terms of assembly, part of a SCF (ASK-cullin-F-box) protein ligase complex. Interacts with CUL1, SKP1A/ASK1 and SPK1B/ASK2.

The protein operates within protein modification; protein ubiquitination. In terms of biological role, component of SCF(ASK-cullin-F-box) E3 ubiquitin ligase complexes, which may mediate the ubiquitination and subsequent proteasomal degradation of target proteins. This chain is F-box protein SKIP14 (SKIP14), found in Arabidopsis thaliana (Mouse-ear cress).